Reading from the N-terminus, the 460-residue chain is Cysteine--tRNA ligase (460 aa).

Position 27 (Cys-27) interacts with Zn(2+). Residues 29–39 (PTVYDDAHLGH) carry the 'HIGH' region motif. Zn(2+)-binding residues include Cys-202, His-227, and Glu-231. The 'KMSKS' region motif lies at 259 to 263 (KMSKS). An ATP-binding site is contributed by Lys-262.

The protein belongs to the class-I aminoacyl-tRNA synthetase family. Monomer. Zn(2+) serves as cofactor.

It is found in the cytoplasm. The catalysed reaction is tRNA(Cys) + L-cysteine + ATP = L-cysteinyl-tRNA(Cys) + AMP + diphosphate. The chain is Cysteine--tRNA ligase from Campylobacter lari (strain RM2100 / D67 / ATCC BAA-1060).